The primary structure comprises 223 residues: Deoxyribose-phosphate aldolase 1 (223 aa).

The active-site Proton donor/acceptor is Asp91. Lys153 functions as the Schiff-base intermediate with acetaldehyde in the catalytic mechanism. Lys182 acts as the Proton donor/acceptor in catalysis.

It belongs to the DeoC/FbaB aldolase family. DeoC type 1 subfamily.

It is found in the cytoplasm. It catalyses the reaction 2-deoxy-D-ribose 5-phosphate = D-glyceraldehyde 3-phosphate + acetaldehyde. It participates in carbohydrate degradation; 2-deoxy-D-ribose 1-phosphate degradation; D-glyceraldehyde 3-phosphate and acetaldehyde from 2-deoxy-alpha-D-ribose 1-phosphate: step 2/2. Functionally, catalyzes a reversible aldol reaction between acetaldehyde and D-glyceraldehyde 3-phosphate to generate 2-deoxy-D-ribose 5-phosphate. The sequence is that of Deoxyribose-phosphate aldolase 1 from Yersinia pestis.